We begin with the raw amino-acid sequence, 113 residues long: T cell receptor alpha variable 8-4 (113 aa).

The first 20 residues, 1–20 (MLLLLVPVLEVIFTLGGTRA), serve as a signal peptide directing secretion. An Ig-like domain is found at 21 to 113 (QSVTQLGSHV…DAAEYFCAVS (93 aa)). Residues Cys-42 and Cys-110 are joined by a disulfide bond. Asn-43 carries an N-linked (GlcNAc...) asparagine glycan.

As to quaternary structure, alpha-beta TR is a heterodimer composed of an alpha and beta chain; disulfide-linked. The alpha-beta TR is associated with the transmembrane signaling CD3 coreceptor proteins to form the TR-CD3 (TcR or TCR). The assembly of alpha-beta TR heterodimers with CD3 occurs in the endoplasmic reticulum where a single alpha-beta TR heterodimer associates with one CD3D-CD3E heterodimer, one CD3G-CD3E heterodimer and one CD247 homodimer forming a stable octameric structure. CD3D-CD3E and CD3G-CD3E heterodimers preferentially associate with TR alpha and TR beta chains, respectively. The association of the CD247 homodimer is the last step of TcR assembly in the endoplasmic reticulum and is required for transport to the cell surface.

The protein localises to the cell membrane. V region of the variable domain of T cell receptor (TR) alpha chain that participates in the antigen recognition. Alpha-beta T cell receptors are antigen specific receptors which are essential to the immune response and are present on the cell surface of T lymphocytes. Recognize peptide-major histocompatibility (MH) (pMH) complexes that are displayed by antigen presenting cells (APC), a prerequisite for efficient T cell adaptive immunity against pathogens. Binding of alpha-beta TR to pMH complex initiates TR-CD3 clustering on the cell surface and intracellular activation of LCK that phosphorylates the ITAM motifs of CD3G, CD3D, CD3E and CD247 enabling the recruitment of ZAP70. In turn ZAP70 phosphorylates LAT, which recruits numerous signaling molecules to form the LAT signalosome. The LAT signalosome propagates signal branching to three major signaling pathways, the calcium, the mitogen-activated protein kinase (MAPK) kinase and the nuclear factor-kappa-B (NF-kB) pathways, leading to the mobilization of transcription factors that are critical for gene expression and essential for T cell growth and differentiation. The T cell repertoire is generated in the thymus, by V-(D)-J rearrangement. This repertoire is then shaped by intrathymic selection events to generate a peripheral T cell pool of self-MH restricted, non-autoaggressive T cells. Post-thymic interaction of alpha-beta TR with the pMH complexes shapes TR structural and functional avidity. The protein is T cell receptor alpha variable 8-4 of Homo sapiens (Human).